An 883-amino-acid polypeptide reads, in one-letter code: Phosphoenolpyruvate carboxylase (883 aa).

Catalysis depends on residues His-138 and Lys-546.

This sequence belongs to the PEPCase type 1 family. The cofactor is Mg(2+).

It carries out the reaction oxaloacetate + phosphate = phosphoenolpyruvate + hydrogencarbonate. In terms of biological role, forms oxaloacetate, a four-carbon dicarboxylic acid source for the tricarboxylic acid cycle. The polypeptide is Phosphoenolpyruvate carboxylase (Escherichia coli O127:H6 (strain E2348/69 / EPEC)).